Here is a 381-residue protein sequence, read N- to C-terminus: Alkanesulfonate monooxygenase (381 aa).

Belongs to the SsuD family. As to quaternary structure, homotetramer.

It catalyses the reaction an alkanesulfonate + FMNH2 + O2 = an aldehyde + FMN + sulfite + H2O + 2 H(+). In terms of biological role, catalyzes the desulfonation of aliphatic sulfonates. The protein is Alkanesulfonate monooxygenase of Enterobacter sp. (strain 638).